The sequence spans 213 residues: Adenylate kinase (213 aa).

An ATP-binding site is contributed by 10-15 (GSGKGT). The tract at residues 30-59 (STGDLFRTNIENDTPLGKEIKQIVENGQLV) is NMP. Residues T31, R36, 57–59 (QLV), 85–88 (GFPR), and Q92 each bind AMP. Residues 121–158 (GRRICQSCCKIFNIYTLPTKEKEICDFCQGILYQRKDD) are LID. R122 provides a ligand contact to ATP. C125 and C128 together coordinate Zn(2+). Residue 131–132 (IF) coordinates ATP. 2 residues coordinate Zn(2+): C145 and C148. The AMP site is built by R155 and R166. K194 serves as a coordination point for ATP.

It belongs to the adenylate kinase family. As to quaternary structure, monomer.

It is found in the cytoplasm. It carries out the reaction AMP + ATP = 2 ADP. Its pathway is purine metabolism; AMP biosynthesis via salvage pathway; AMP from ADP: step 1/1. Catalyzes the reversible transfer of the terminal phosphate group between ATP and AMP. Plays an important role in cellular energy homeostasis and in adenine nucleotide metabolism. The polypeptide is Adenylate kinase (Borrelia duttonii (strain Ly)).